We begin with the raw amino-acid sequence, 330 residues long: Glycerol-3-phosphate dehydrogenase [NAD(P)+] (330 aa).

The NADPH site is built by Ser-10, Trp-11, Arg-31, and Lys-105. Residues Lys-105, Gly-135, and Ser-137 each coordinate sn-glycerol 3-phosphate. Ala-139 serves as a coordination point for NADPH. Positions 190, 243, 253, 254, and 255 each coordinate sn-glycerol 3-phosphate. The active-site Proton acceptor is the Lys-190. Arg-254 is a binding site for NADPH. The NADPH site is built by Val-278 and Glu-280.

It belongs to the NAD-dependent glycerol-3-phosphate dehydrogenase family.

It localises to the cytoplasm. It carries out the reaction sn-glycerol 3-phosphate + NAD(+) = dihydroxyacetone phosphate + NADH + H(+). The enzyme catalyses sn-glycerol 3-phosphate + NADP(+) = dihydroxyacetone phosphate + NADPH + H(+). It functions in the pathway membrane lipid metabolism; glycerophospholipid metabolism. Its function is as follows. Catalyzes the reduction of the glycolytic intermediate dihydroxyacetone phosphate (DHAP) to sn-glycerol 3-phosphate (G3P), the key precursor for phospholipid synthesis. This is Glycerol-3-phosphate dehydrogenase [NAD(P)+] from Oleidesulfovibrio alaskensis (strain ATCC BAA-1058 / DSM 17464 / G20) (Desulfovibrio alaskensis).